Consider the following 337-residue polypeptide: Holliday junction branch migration complex subunit RuvB (337 aa).

A large ATPase domain (RuvB-L) region spans residues 1 to 179; sequence MTHQVSVLHQ…FSFTGRMSYY (179 aa). ATP is bound by residues Leu18, Arg19, Gly60, Lys63, Thr64, Ser65, 126 to 128, Arg169, Tyr179, and Arg216; that span reads EDY. Thr64 serves as a coordination point for Mg(2+). The small ATPAse domain (RuvB-S) stretch occupies residues 180-250; sequence SDEDLTTILK…VAEKALAMLL (71 aa). The interval 253–337 is head domain (RuvB-H); sequence DWGLNEIDIK…DNLQSLGEEK (85 aa). 2 residues coordinate DNA: Lys308 and Arg313.

This sequence belongs to the RuvB family. As to quaternary structure, homohexamer. Forms an RuvA(8)-RuvB(12)-Holliday junction (HJ) complex. HJ DNA is sandwiched between 2 RuvA tetramers; dsDNA enters through RuvA and exits via RuvB. An RuvB hexamer assembles on each DNA strand where it exits the tetramer. Each RuvB hexamer is contacted by two RuvA subunits (via domain III) on 2 adjacent RuvB subunits; this complex drives branch migration. In the full resolvosome a probable DNA-RuvA(4)-RuvB(12)-RuvC(2) complex forms which resolves the HJ.

It localises to the cytoplasm. It catalyses the reaction ATP + H2O = ADP + phosphate + H(+). In terms of biological role, the RuvA-RuvB-RuvC complex processes Holliday junction (HJ) DNA during genetic recombination and DNA repair, while the RuvA-RuvB complex plays an important role in the rescue of blocked DNA replication forks via replication fork reversal (RFR). RuvA specifically binds to HJ cruciform DNA, conferring on it an open structure. The RuvB hexamer acts as an ATP-dependent pump, pulling dsDNA into and through the RuvAB complex. RuvB forms 2 homohexamers on either side of HJ DNA bound by 1 or 2 RuvA tetramers; 4 subunits per hexamer contact DNA at a time. Coordinated motions by a converter formed by DNA-disengaged RuvB subunits stimulates ATP hydrolysis and nucleotide exchange. Immobilization of the converter enables RuvB to convert the ATP-contained energy into a lever motion, pulling 2 nucleotides of DNA out of the RuvA tetramer per ATP hydrolyzed, thus driving DNA branch migration. The RuvB motors rotate together with the DNA substrate, which together with the progressing nucleotide cycle form the mechanistic basis for DNA recombination by continuous HJ branch migration. Branch migration allows RuvC to scan DNA until it finds its consensus sequence, where it cleaves and resolves cruciform DNA. The polypeptide is Holliday junction branch migration complex subunit RuvB (Chlamydia caviae (strain ATCC VR-813 / DSM 19441 / 03DC25 / GPIC) (Chlamydophila caviae)).